We begin with the raw amino-acid sequence, 183 residues long: MTMLQQILLISVIIGTVHVHEVDCANEVLKARAYIFEAVKGGNPAKTVGIIDLVQTGTLVKMNGSVSGLQPGLHGFHIHEKGDLGNGCLAAGAHFNPHKMMHGAPEDSNRHVGDLGNIETPKTGDTPILISDSVISLTGQHNVIGRAIVIHADMDDLGRGTSELSKTTGNAGARVACGVIGIL.

The signal sequence occupies residues 1-32 (MTMLQQILLISVIIGTVHVHEVDCANEVLKAR). N-linked (GlcNAc...) asparagine glycosylation is present at Asn-63. Cu cation contacts are provided by His-77, His-79, and His-94. An intrachain disulfide couples Cys-88 to Cys-177. 4 residues coordinate Zn(2+): His-94, His-102, His-111, and Asp-114. Residue His-151 participates in Cu cation binding.

This sequence belongs to the Cu-Zn superoxide dismutase family. Requires Cu cation as cofactor. Zn(2+) is required as a cofactor.

It is found in the secreted. Its subcellular location is the extracellular space. The catalysed reaction is 2 superoxide + 2 H(+) = H2O2 + O2. Destroys radicals which are normally produced within the cells and which are toxic to biological systems. The sequence is that of Extracellular superoxide dismutase [Cu-Zn] (SOD) from Haemonchus contortus (Barber pole worm).